Consider the following 227-residue polypeptide: Protein Saci_0792 (227 aa).

The AMMECR1 domain occupies 15 to 209; it reads DIGKQLIKIA…EINKNTDEII (195 aa).

The polypeptide is Protein Saci_0792 (Sulfolobus acidocaldarius (strain ATCC 33909 / DSM 639 / JCM 8929 / NBRC 15157 / NCIMB 11770)).